A 529-amino-acid chain; its full sequence is UDP-glucuronosyltransferase 2B18 (529 aa).

The N-terminal stretch at 1–21 is a signal peptide; the sequence is MSVKWTSVILLIQLSFYFSSG. 2 N-linked (GlcNAc...) asparagine glycosylation sites follow: Asn-67 and Asn-68. A helical transmembrane segment spans residues 493 to 513; that stretch reads VIGFLLACVATVIFIIMKCCL.

This sequence belongs to the UDP-glycosyltransferase family. In terms of tissue distribution, expressed in liver, prostate, kidney, testis, adrenal, bile duct, bladder, colon, small intestine, cerebellum and pancreas.

The protein localises to the microsome membrane. It localises to the endoplasmic reticulum membrane. The catalysed reaction is glucuronate acceptor + UDP-alpha-D-glucuronate = acceptor beta-D-glucuronoside + UDP + H(+). Functionally, UDPGT is of major importance in the conjugation and subsequent elimination of potentially toxic xenobiotics and endogenous compounds. This isozyme displays activity toward 3-hydroxyandrogens. It is principally active on C19 steroids having a hydroxyl group at position 3-alpha of the steroid molecule and also active on planar phenols and bile acids. The sequence is that of UDP-glucuronosyltransferase 2B18 (UGT2B18) from Macaca fascicularis (Crab-eating macaque).